Reading from the N-terminus, the 252-residue chain is 2,5-diamino-6-ribosylamino-4(3H)-pyrimidinone 5'-phosphate reductase (252 aa).

NADP(+)-binding positions include T80, D84, V166, and 189–193 (GGIVI).

The protein belongs to the HTP reductase family. As to quaternary structure, homodimer.

The catalysed reaction is 2,5-diamino-6-(1-D-ribitylamino)pyrimidin-4(3H)-one 5'-phosphate + NADP(+) = 2,5-diamino-6-(1-D-ribosylamino)pyrimidin-4(3H)-one 5'-phosphate + NADPH + H(+). It catalyses the reaction 2,5-diamino-6-(1-D-ribitylamino)pyrimidin-4(3H)-one 5'-phosphate + NAD(+) = 2,5-diamino-6-(1-D-ribosylamino)pyrimidin-4(3H)-one 5'-phosphate + NADH + H(+). It participates in cofactor biosynthesis; riboflavin biosynthesis. Its function is as follows. Catalyzes an early step in riboflavin biosynthesis, the NADPH-dependent reduction of the ribose side chain of 2,5-diamino-6-ribosylamino-4(3H)-pyrimidinone 5'-phosphate, yielding 2,5-diamino-6-ribitylamino-4(3H)-pyrimidinone 5'-phosphate. The sequence is that of 2,5-diamino-6-ribosylamino-4(3H)-pyrimidinone 5'-phosphate reductase (RIB7) from Kluyveromyces lactis (strain ATCC 8585 / CBS 2359 / DSM 70799 / NBRC 1267 / NRRL Y-1140 / WM37) (Yeast).